An 883-amino-acid polypeptide reads, in one-letter code: Protein argonaute 16 (883 aa).

The 113-residue stretch at 254-366 folds into the PAZ domain; the sequence is PVFDFLLTNQ…VPIELCHMVS (113 aa). The Piwi domain maps to 535 to 844; it reads FLLCVLPERK…AAAQMGQFMK (310 aa).

It belongs to the argonaute family. Ago subfamily.

Probably involved in the RNA silencing pathway. May bind to short RNAs such as microRNAs (miRNAs) or short interfering RNAs (siRNAs), and represses the translation of mRNAs which are complementary to them. The chain is Protein argonaute 16 (AGO16) from Oryza sativa subsp. japonica (Rice).